We begin with the raw amino-acid sequence, 356 residues long: Putative [LysW]-L-2-aminoadipate/[LysW]-L-glutamate phosphate reductase (356 aa).

11-14 is a binding site for NADP(+); it reads SGYT. Residue Cys-157 is part of the active site. Asn-323 is a binding site for NADP(+).

It belongs to the NAGSA dehydrogenase family. Type 1 subfamily. LysY sub-subfamily.

It is found in the cytoplasm. It catalyses the reaction [amino-group carrier protein]-C-terminal-N-(1-carboxy-5-oxopentan-1-yl)-L-glutamine + phosphate + NADP(+) = [amino-group carrier protein]-C-terminal-N-(1-carboxy-5-phosphooxy-5-oxopentan-1-yl)-L-glutamine + NADPH + H(+). The enzyme catalyses [amino-group carrier protein]-C-terminal-gamma-(L-glutamyl-5-semialdehyde)-L-glutamate + phosphate + NADP(+) = [amino-group carrier protein]-C-terminal-gamma-(5-phospho-L-glutamyl)-L-glutamate + NADPH + H(+). It functions in the pathway amino-acid biosynthesis; L-lysine biosynthesis via AAA pathway; L-lysine from L-alpha-aminoadipate (Thermus route): step 3/5. Its pathway is amino-acid biosynthesis; L-arginine biosynthesis. In terms of biological role, involved in both the arginine and lysine biosynthetic pathways. The protein is Putative [LysW]-L-2-aminoadipate/[LysW]-L-glutamate phosphate reductase of Ignicoccus hospitalis (strain KIN4/I / DSM 18386 / JCM 14125).